Here is a 379-residue protein sequence, read N- to C-terminus: Deoxyhypusine synthase (379 aa).

Residues 108 to 112, 134 to 136, glutamate 140, and aspartate 257 contribute to the NAD(+) site; these read SNLIS and TAG. A spermidine-binding site is contributed by 139–140; that stretch reads EE. Residue aspartate 262 participates in spermidine binding. Residue glycine 304 participates in NAD(+) binding. Histidine 309 contributes to the spermidine binding site. Residue 329–330 coordinates NAD(+); the sequence is TG. Residues 335–337 and 344–350 each bind spermidine; these read GSD and EAVSWGK. The active-site Nucleophile is lysine 350. NAD(+) is bound at residue 363 to 364; that stretch reads DA.

The protein belongs to the deoxyhypusine synthase family. Requires NAD(+) as cofactor.

The catalysed reaction is [eIF5A protein]-L-lysine + spermidine = [eIF5A protein]-deoxyhypusine + propane-1,3-diamine. It functions in the pathway protein modification; eIF5A hypusination. In terms of biological role, catalyzes the NAD-dependent oxidative cleavage of spermidine and the subsequent transfer of the butylamine moiety of spermidine to the epsilon-amino group of a specific lysine residue of the eIF-5A precursor protein to form the intermediate deoxyhypusine residue. This is Deoxyhypusine synthase (DYS1) from Kluyveromyces lactis (strain ATCC 8585 / CBS 2359 / DSM 70799 / NBRC 1267 / NRRL Y-1140 / WM37) (Yeast).